We begin with the raw amino-acid sequence, 463 residues long: ATP synthase subunit beta (463 aa).

Residue 152–159 (GGAGVGKT) coordinates ATP.

Belongs to the ATPase alpha/beta chains family. As to quaternary structure, F-type ATPases have 2 components, CF(1) - the catalytic core - and CF(0) - the membrane proton channel. CF(1) has five subunits: alpha(3), beta(3), gamma(1), delta(1), epsilon(1). CF(0) has three main subunits: a(1), b(2) and c(9-12). The alpha and beta chains form an alternating ring which encloses part of the gamma chain. CF(1) is attached to CF(0) by a central stalk formed by the gamma and epsilon chains, while a peripheral stalk is formed by the delta and b chains.

It is found in the cell membrane. The enzyme catalyses ATP + H2O + 4 H(+)(in) = ADP + phosphate + 5 H(+)(out). In terms of biological role, produces ATP from ADP in the presence of a proton gradient across the membrane. The catalytic sites are hosted primarily by the beta subunits. This chain is ATP synthase subunit beta, found in Clostridium botulinum (strain Alaska E43 / Type E3).